The following is a 398-amino-acid chain: Lysophosphatidylserine lipase ABHD12 (398 aa).

Residues 1 to 15 (MRKRTEPVTLEHERC) show a composition bias toward basic and acidic residues. Positions 1–24 (MRKRTEPVTLEHERCAASGSSSSG) are disordered. At 1–74 (MRKRTEPVTL…RKSLWFRLRK (74 aa)) the chain is on the cytoplasmic side. Residues 75–95 (ILLCVLGFYIAIPFLVKLCPG) traverse the membrane as a helical segment. Over 96-398 (IQAKLIFLNF…LGKSEPERQH (303 aa)) the chain is Extracellular. An N-linked (GlcNAc...) asparagine glycan is attached at N123. The active-site Nucleophile is the S246. Residues D333 and H372 each act as charge relay system in the active site.

Belongs to the serine esterase family.

The protein localises to the endoplasmic reticulum membrane. It catalyses the reaction 1-(9Z-octadecenoyl)-sn-glycero-3-phospho-L-serine + H2O = sn-glycero-3-phospho-L-serine + (9Z)-octadecenoate + H(+). The enzyme catalyses 1-(9Z-octadecenoyl)-sn-glycero-3-phospho-(1'-sn-glycerol) + H2O = sn-glycero-3-phospho-(1'-sn-glycerol) + (9Z)-octadecenoate + H(+). It carries out the reaction 1-(9Z-octadecenoyl)-sn-glycero-3-phospho-(1D-myo-inositol) + H2O = sn-glycero-3-phospho-1D-myo-inositol + (9Z)-octadecenoate + H(+). The catalysed reaction is 1-(9Z-octadecenoyl)-sn-glycero-3-phosphoethanolamine + H2O = sn-glycero-3-phosphoethanolamine + (9Z)-octadecenoate + H(+). It catalyses the reaction 1-(9Z-octadecenoyl)-sn-glycero-3-phosphocholine + H2O = 1-(9Z-octadecenoyl)-sn-glycerol + phosphocholine + H(+). The enzyme catalyses 2-(9Z-octadecenoyl)-glycerol + H2O = glycerol + (9Z)-octadecenoate + H(+). It carries out the reaction 1-hexadecanoyl-sn-glycero-3-phospho-L-serine + H2O = sn-glycero-3-phospho-L-serine + hexadecanoate + H(+). The catalysed reaction is 2-(5Z,8Z,11Z,14Z-eicosatetraenoyl)-glycerol + H2O = glycerol + (5Z,8Z,11Z,14Z)-eicosatetraenoate + H(+). It catalyses the reaction Hydrolyzes glycerol monoesters of long-chain fatty acids.. The enzyme catalyses 1-decanoylglycerol + H2O = decanoate + glycerol + H(+). It carries out the reaction 1-dodecanoylglycerol + H2O = dodecanoate + glycerol + H(+). The catalysed reaction is 1-tetradecanoylglycerol + H2O = tetradecanoate + glycerol + H(+). It catalyses the reaction 2-hexadecanoylglycerol + H2O = glycerol + hexadecanoate + H(+). The enzyme catalyses 1-(9Z-octadecenoyl)-glycerol + H2O = glycerol + (9Z)-octadecenoate + H(+). It carries out the reaction 2-(9Z,12Z-octadecadienoyl)-glycerol + H2O = (9Z,12Z)-octadecadienoate + glycerol + H(+). The catalysed reaction is 1-(5Z,8Z,11Z,14Z-eicosatetraenoyl)-glycerol + H2O = glycerol + (5Z,8Z,11Z,14Z)-eicosatetraenoate + H(+). It catalyses the reaction 1-(9Z,12Z-octadecadienoyl)-glycerol + H2O = (9Z,12Z)-octadecadienoate + glycerol + H(+). The enzyme catalyses 1-hexadecanoylglycerol + H2O = glycerol + hexadecanoate + H(+). It carries out the reaction 1-octadecanoylglycerol + H2O = octadecanoate + glycerol + H(+). The catalysed reaction is 1-octadecanoyl-2-(9,10-epoxyoctadecanoyl)-sn-glycero-3-phospho-L-serine + H2O = 9,10-epoxyoctadecanoate + 1-octadecanoyl-sn-glycero-3-phosphoserine + H(+). It catalyses the reaction 1-octadecanoyl-2-(10-hydroxyoctadecanoyl)-sn-glycero-3-phospho-L-serine + H2O = 1-octadecanoyl-sn-glycero-3-phosphoserine + 10-hydroxyoctadecanoate + H(+). The enzyme catalyses 1-hexadecanoyl-2-(10-hydroxyoctadecanoyl)-sn-glycero-3-phospho-L-serine + H2O = 10-hydroxyoctadecanoate + 1-hexadecanoyl-sn-glycero-3-phospho-L-serine + H(+). Lysophosphatidylserine (LPS) lipase that mediates the hydrolysis of lysophosphatidylserine, a class of signaling lipids that regulates immunological and neurological processes. Represents a major lysophosphatidylserine lipase in the brain, thereby playing a key role in the central nervous system. Also able to hydrolyze oxidized phosphatidylserine; oxidized phosphatidylserine is produced in response to severe inflammatory stress and constitutes a proapoptotic 'eat me' signal. Also has monoacylglycerol (MAG) lipase activity: hydrolyzes 2-arachidonoylglycerol (2-AG), thereby acting as a regulator of endocannabinoid signaling pathways. Has a strong preference for very-long-chain lipid substrates; substrate specificity is likely due to improved catalysis and not improved substrate binding. This Rattus norvegicus (Rat) protein is Lysophosphatidylserine lipase ABHD12.